Reading from the N-terminus, the 388-residue chain is DNA ADP-ribosyl transferase-DNA ADP-ribosyl glycohydrolase fusion protein (388 aa).

The DarT domain occupies 6–197 (RELYYITHID…PVIPDPTFFF (192 aa)). NAD(+) is bound by residues 10–12 (YIT) and R50. Residues 34-52 (QSINCKKVYDNSIVLKRKS) form an NAD(+)-binding element region. R50 (proton acceptor) is an active-site residue. Residues 107-152 (TDGNAASSETQIYRKSEIKNIKNIISVKDMEYWREEDGSKRKIMAE) form an ADP-ribosylating turn-turn loop region. E152 is a catalytic residue. Residues 196 to 376 (FFLPNREIKL…IYLPLEKRIP (181 aa)) form the Macro domain. Residues 215–216 (DM), 227–229 (SVN), T301, 339–343 (GCGLG), and 371–372 (LE) contribute to the ADP-D-ribose site.

In the N-terminal section; belongs to the DarT ADP-ribosyltransferase family. This sequence in the C-terminal section; belongs to the DarG ADP-ribosyl glycohydrolase family.

The catalysed reaction is an N-(ADP-alpha-D-ribosyl)-thymidine in DNA + H2O = a thymidine in DNA + ADP-D-ribose. The enzyme catalyses a thymidine in DNA + NAD(+) = an N-(ADP-alpha-D-ribosyl)-thymidine in DNA + nicotinamide + H(+). Its function is as follows. A fusion protein of the toxic and antitoxin components of a hybrid type II/IV toxin-antitoxin (TA) system. The N-terminal domain ADP-ribosylates ssDNA on a thymidine residue, while the C-terminal domain removes the modification, neutralizing the toxic effect. This Thermosipho africanus (strain H17ap60334) protein is DNA ADP-ribosyl transferase-DNA ADP-ribosyl glycohydrolase fusion protein.